The primary structure comprises 163 residues: Crossover junction endodeoxyribonuclease RuvC (163 aa).

Catalysis depends on residues Asp7, Glu66, and Asp139. Positions 7, 66, and 139 each coordinate Mg(2+).

Belongs to the RuvC family. As to quaternary structure, homodimer which binds Holliday junction (HJ) DNA. The HJ becomes 2-fold symmetrical on binding to RuvC with unstacked arms; it has a different conformation from HJ DNA in complex with RuvA. In the full resolvosome a probable DNA-RuvA(4)-RuvB(12)-RuvC(2) complex forms which resolves the HJ. Mg(2+) is required as a cofactor.

Its subcellular location is the cytoplasm. It catalyses the reaction Endonucleolytic cleavage at a junction such as a reciprocal single-stranded crossover between two homologous DNA duplexes (Holliday junction).. Functionally, the RuvA-RuvB-RuvC complex processes Holliday junction (HJ) DNA during genetic recombination and DNA repair. Endonuclease that resolves HJ intermediates. Cleaves cruciform DNA by making single-stranded nicks across the HJ at symmetrical positions within the homologous arms, yielding a 5'-phosphate and a 3'-hydroxyl group; requires a central core of homology in the junction. The consensus cleavage sequence is 5'-(A/T)TT(C/G)-3'. Cleavage occurs on the 3'-side of the TT dinucleotide at the point of strand exchange. HJ branch migration catalyzed by RuvA-RuvB allows RuvC to scan DNA until it finds its consensus sequence, where it cleaves and resolves the cruciform DNA. The chain is Crossover junction endodeoxyribonuclease RuvC from Thermomicrobium roseum (strain ATCC 27502 / DSM 5159 / P-2).